The sequence spans 289 residues: ATP synthase gamma chain (289 aa).

The protein belongs to the ATPase gamma chain family. F-type ATPases have 2 components, CF(1) - the catalytic core - and CF(0) - the membrane proton channel. CF(1) has five subunits: alpha(3), beta(3), gamma(1), delta(1), epsilon(1). CF(0) has three main subunits: a, b and c.

It localises to the cell inner membrane. Its function is as follows. Produces ATP from ADP in the presence of a proton gradient across the membrane. The gamma chain is believed to be important in regulating ATPase activity and the flow of protons through the CF(0) complex. This chain is ATP synthase gamma chain, found in Coxiella burnetii (strain Dugway 5J108-111).